Here is a 554-residue protein sequence, read N- to C-terminus: Asparagine synthetase B [glutamine-hydrolyzing] (554 aa).

Cysteine 2 functions as the For GATase activity in the catalytic mechanism. The region spanning 2–186 (CSIFGVFDIK…AGSYLWSQDG (185 aa)) is the Glutamine amidotransferase type-2 domain. L-glutamine-binding positions include 50–54 (RLSIV), 75–77 (NGE), and aspartate 99. ATP contacts are provided by residues leucine 233, valine 273, and 347–348 (SG).

Belongs to the asparagine synthetase family. As to quaternary structure, homodimer.

It catalyses the reaction L-aspartate + L-glutamine + ATP + H2O = L-asparagine + L-glutamate + AMP + diphosphate + H(+). Its pathway is amino-acid biosynthesis; L-asparagine biosynthesis; L-asparagine from L-aspartate (L-Gln route): step 1/1. With respect to regulation, glutamine-dependent asparagine synthesis activity can be inhibited by aspartic acid analogs (such as a sulfinate derivative and (2S,3R)-2-amino-3-methylsuccinate) in vitro; the inhibition is competitive with respect to aspartate. In terms of biological role, catalyzes the ATP-dependent conversion of aspartate into asparagine, using glutamine as a source of nitrogen. Can also use ammonia as the nitrogen source in vitro, albeit with lower efficiency. As nucleotide substrates, ATP and dATP are utilized at a similar rate in both the glutamine- and ammonia-dependent reactions, whereas GTP utilization is only 15% that of ATP, and CTP, UTP, ITP and XTP are very poor or not substrates. Also exhibits glutaminase activity. This Escherichia coli (strain K12) protein is Asparagine synthetase B [glutamine-hydrolyzing] (asnB).